Here is a 488-residue protein sequence, read N- to C-terminus: MEIRSLIVSMNPNLSSFELSRPVSPLTRSLVPFRSTKLVPRSISRVSASISTPNSETDKISVKPVYVPTSPNRELRTPHSGYHFDGTPRKFFEGWYFRVSIPEKRESFCFMYSVENPAFRQSLSPLEVALYGPRFTGVGAQILGANDKYLCQYEQDSHNFWGDRHELVLGNTFSAVPGAKAPNKEVPPEEFNRRVSEGFQATPFWHQGHICDDGRTDYAETVKSARWEYSTRPVYGWGDVGAKQKSTAGWPAAFPVFEPHWQICMAGGLSTGWIEWGGERFEFRDAPSYSEKNWGGGFPRKWFWVQCNVFEGATGEVALTAGGGLRQLPGLTETYENAALVCVHYDGKMYEFVPWNGVVRWEMSPWGYWYITAENENHVVELEARTNEAGTPLRAPTTEVGLATACRDSCYGELKLQIWERLYDGSKGKVILETKSSMAAVEIGGGPWFGTWKGDTSNTPELLKQALQVPLDLESALGLVPFFKPPGL.

Residues 1-76 (MEIRSLIVSM…VPTSPNRELR (76 aa)) constitute a chloroplast transit peptide.

It localises to the plastid. Its subcellular location is the chloroplast. The protein localises to the plastoglobule. It catalyses the reaction delta-tocopherol = 2-methyl-6-phytyl-1,4-benzene-1,4-diol. It carries out the reaction gamma-tocopherol = 2,3-dimethyl-6-phytylbenzene-1,4-diol. The catalysed reaction is delta-tocotrienol = 6-geranylgeranyl-2-methylbenzene-1,4-diol. The enzyme catalyses gamma-tocotrienol = 6-geranylgeranyl-2,3-dimethylbenzene-1,4-diol. It functions in the pathway cofactor biosynthesis; tocopherol biosynthesis. In terms of biological role, involved in the synthesis of both tocopherols and tocotrienols (vitamin E), which presumably protect photosynthetic complexes from oxidative stress. Catalyzes the conversion of 2-methyl-6-phytyl-1,4-hydroquinone and 2,3-dimethyl-5-phytyl-1,4-hydroquinone (DMPQ) to delta- and gamma-tocopherol respectively. Also converts 2,3-dimethyl-5-geranylgeranyl-1,4-hydroquinone (DMGQ) to gamma-tocotrienol. The sequence is that of Tocopherol cyclase, chloroplastic (VTE1) from Arabidopsis thaliana (Mouse-ear cress).